Here is a 513-residue protein sequence, read N- to C-terminus: Probable G-protein coupled receptor Mth-like 9 (513 aa).

A signal peptide spans 1 to 19 (MVSPLIILLIIWLSVGAKS). The Extracellular segment spans residues 20 to 207 (VEIASINHPC…NCERFQTGYR (188 aa)). Disulfide bonds link Cys29-Cys82, Cys84-Cys89, Cys93-Cys181, and Cys94-Cys107. N-linked (GlcNAc...) asparagine glycosylation is present at Asn36. Asn106, Asn125, and Asn165 each carry an N-linked (GlcNAc...) asparagine glycan. Residues 208–228 (VWIYAICSIIAIIINIFILSL) form a helical membrane-spanning segment. Residues 229–242 (LGSVRDARKSHYGQ) lie on the Cytoplasmic side of the membrane. A helical transmembrane segment spans residues 243-263 (LIIYYLLSMIVGYSLLVYLAL). Residues 264 to 276 (KNPMKLSHVACRN) lie on the Extracellular side of the membrane. A helical transmembrane segment spans residues 277–297 (IGFLAYFCIMLSFVFLAICSL). The Cytoplasmic segment spans residues 298-314 (DFLLKFKQKAVRSSVRR). Residues 315–335 (LSLALAVLAVIGLRFLVSLAQ) form a helical membrane-spanning segment. Topologically, residues 336-360 (DSKLPKHFKPGMGEDYCWFDVRTWG) are extracellular. The chain crosses the membrane as a helical span at residues 361–381 (ILIYYYGPIALLLIFSIVCCL). The Cytoplasmic segment spans residues 382–403 (KAYFSIYELPPDTQYILGTQLK). Residues 404 to 424 (IVKTHFYAFSAYIVGVFAVWI) form a helical membrane-spanning segment. The Extracellular portion of the chain corresponds to 425–438 (REIVVYIMARVREH). Residues 439 to 459 (FFIIDFWSGICILGLAIAGFI) form a helical membrane-spanning segment. At 460–513 (LLLGKNLHVKSWWAINVESSQTDLSIINARVYKFDEKGDLKSSDSPYKPTVTSL) the chain is on the cytoplasmic side.

The protein belongs to the G-protein coupled receptor 2 family. Mth subfamily.

It localises to the cell membrane. This Drosophila melanogaster (Fruit fly) protein is Probable G-protein coupled receptor Mth-like 9 (mthl9).